A 163-amino-acid polypeptide reads, in one-letter code: Protein LOL5 (163 aa).

2 stretches are compositionally biased toward polar residues: residues 1 to 25 and 33 to 44; these read MSQL…QPQS and LQPQHPPSSTAH. Residues 1–51 form a disordered region; sequence MSQLPLASQATTTDLVSTTAMQPQSEGIVDESLQPQHPPSSTAHDSPCLQD. Putative zinc finger stretches follow at residues 70 to 100 and 108 to 138; these read QMVC…MNYV and KVHC…VTEI.

The protein localises to the nucleus. In terms of biological role, involved in plant growth and disease resistance. The protein is Protein LOL5 (LOL5) of Oryza sativa subsp. japonica (Rice).